The chain runs to 238 residues: Enolase-phosphatase E1 (238 aa).

Residues Asp-14 and Glu-16 each contribute to the Mg(2+) site. Residues 128 to 129 and Lys-165 contribute to the substrate site; that span reads SS. Position 192 (Asp-192) interacts with Mg(2+).

The protein belongs to the HAD-like hydrolase superfamily. MasA/MtnC family. Monomer. Requires Mg(2+) as cofactor.

The protein resides in the cytoplasm. The protein localises to the nucleus. The enzyme catalyses 5-methylsulfanyl-2,3-dioxopentyl phosphate + H2O = 1,2-dihydroxy-5-(methylsulfanyl)pent-1-en-3-one + phosphate. The protein operates within amino-acid biosynthesis; L-methionine biosynthesis via salvage pathway; L-methionine from S-methyl-5-thio-alpha-D-ribose 1-phosphate: step 3/6. Its pathway is amino-acid biosynthesis; L-methionine biosynthesis via salvage pathway; L-methionine from S-methyl-5-thio-alpha-D-ribose 1-phosphate: step 4/6. Bifunctional enzyme that catalyzes the enolization of 2,3-diketo-5-methylthiopentyl-1-phosphate (DK-MTP-1-P) into the intermediate 2-hydroxy-3-keto-5-methylthiopentenyl-1-phosphate (HK-MTPenyl-1-P), which is then dephosphorylated to form the acireductone 1,2-dihydroxy-3-keto-5-methylthiopentene (DHK-MTPene). In Fusarium vanettenii (strain ATCC MYA-4622 / CBS 123669 / FGSC 9596 / NRRL 45880 / 77-13-4) (Fusarium solani subsp. pisi), this protein is Enolase-phosphatase E1.